Consider the following 100-residue polypeptide: UPF0213 protein YhbQ (100 aa).

Residues 2-77 (TPWFLYLIRT…KQLTKRQKER (76 aa)) form the GIY-YIG domain.

This sequence belongs to the UPF0213 family.

The polypeptide is UPF0213 protein YhbQ (Escherichia coli O1:K1 / APEC).